The primary structure comprises 232 residues: Phosphatidylserine decarboxylase proenzyme (232 aa).

Serine 190 functions as the Schiff-base intermediate with substrate; via pyruvic acid in the catalytic mechanism. At serine 190 the chain carries Pyruvic acid (Ser); by autocatalysis.

This sequence belongs to the phosphatidylserine decarboxylase family. PSD-A subfamily. In terms of assembly, heterodimer of a large membrane-associated beta subunit and a small pyruvoyl-containing alpha subunit. Requires pyruvate as cofactor. Is synthesized initially as an inactive proenzyme. Formation of the active enzyme involves a self-maturation process in which the active site pyruvoyl group is generated from an internal serine residue via an autocatalytic post-translational modification. Two non-identical subunits are generated from the proenzyme in this reaction, and the pyruvate is formed at the N-terminus of the alpha chain, which is derived from the carboxyl end of the proenzyme. The post-translation cleavage follows an unusual pathway, termed non-hydrolytic serinolysis, in which the side chain hydroxyl group of the serine supplies its oxygen atom to form the C-terminus of the beta chain, while the remainder of the serine residue undergoes an oxidative deamination to produce ammonia and the pyruvoyl prosthetic group on the alpha chain.

The protein resides in the cell membrane. It catalyses the reaction a 1,2-diacyl-sn-glycero-3-phospho-L-serine + H(+) = a 1,2-diacyl-sn-glycero-3-phosphoethanolamine + CO2. The protein operates within phospholipid metabolism; phosphatidylethanolamine biosynthesis; phosphatidylethanolamine from CDP-diacylglycerol: step 2/2. Catalyzes the formation of phosphatidylethanolamine (PtdEtn) from phosphatidylserine (PtdSer). The sequence is that of Phosphatidylserine decarboxylase proenzyme from Rhodopseudomonas palustris (strain BisB18).